We begin with the raw amino-acid sequence, 431 residues long: Glutamate-1-semialdehyde 2,1-aminomutase (431 aa).

The residue at position 269 (lysine 269) is an N6-(pyridoxal phosphate)lysine.

Belongs to the class-III pyridoxal-phosphate-dependent aminotransferase family. HemL subfamily. As to quaternary structure, homodimer. The cofactor is pyridoxal 5'-phosphate.

The protein resides in the cytoplasm. It catalyses the reaction (S)-4-amino-5-oxopentanoate = 5-aminolevulinate. The protein operates within porphyrin-containing compound metabolism; protoporphyrin-IX biosynthesis; 5-aminolevulinate from L-glutamyl-tRNA(Glu): step 2/2. In Francisella tularensis subsp. tularensis (strain SCHU S4 / Schu 4), this protein is Glutamate-1-semialdehyde 2,1-aminomutase.